Reading from the N-terminus, the 240-residue chain is Ribonuclease PH (240 aa).

Phosphate-binding positions include arginine 87 and 125 to 127 (GTR).

Belongs to the RNase PH family. Homohexameric ring arranged as a trimer of dimers.

It carries out the reaction tRNA(n+1) + phosphate = tRNA(n) + a ribonucleoside 5'-diphosphate. Its function is as follows. Phosphorolytic 3'-5' exoribonuclease that plays an important role in tRNA 3'-end maturation. Removes nucleotide residues following the 3'-CCA terminus of tRNAs; can also add nucleotides to the ends of RNA molecules by using nucleoside diphosphates as substrates, but this may not be physiologically important. Probably plays a role in initiation of 16S rRNA degradation (leading to ribosome degradation) during starvation. This Ruminiclostridium cellulolyticum (strain ATCC 35319 / DSM 5812 / JCM 6584 / H10) (Clostridium cellulolyticum) protein is Ribonuclease PH.